The sequence spans 157 residues: uncharacterized protein (157 aa).

The tract at residues 1–157 is disordered; that stretch reads MNRGPPLRSR…SFSFLVPSNS (157 aa). Over residues 8-31 the composition is skewed to pro residues; that stretch reads RSRPPSSPPPASAFPGPSPFPSPS. A compositionally biased stretch (basic residues) spans 62 to 71; it reads RTSHPPRCPH. Residues 76–95 show a composition bias toward pro residues; that stretch reads PSAPSPPFTPPHPLPTPTPS. 2 stretches are compositionally biased toward low complexity: residues 96-117 and 124-157; these read SSPRSPWLSLAPLPTSSASLAS and SFSSPSSPSTSPLSPSSSSFPSSSSFSFLVPSNS.

This is an uncharacterized protein from Vitis vinifera (Grape).